The chain runs to 419 residues: Inner ear-specific collagen (419 aa).

An N-terminal signal peptide occupies residues 1 to 19 (MDAYSLSPTDSTTYSSDTF). Residues 20–57 (STEFHTDAIAPPGNTPGNYTLDYNECFFNFCECCPPEK) form a nonhelical region (NC2) region. Asn37 is a glycosylation site (N-linked (GlcNAc...) asparagine). Residues 58-274 (GPMGPMGERG…RGPKGPPGES (217 aa)) form a triple-helical region (COL1) region. A disordered region spans residues 63-275 (MGERGLPGPP…GPKGPPGESV (213 aa)). 2 stretches are compositionally biased toward basic and acidic residues: residues 129–144 (PGEKGDPGLKGDKGER) and 184–202 (LKGEQGLKGECLQGEKGER). Positions 227–236 (GPLGGKGDTG) are enriched in gly residues. The C1q domain occupies 275–412 (VEQIRSAFSV…GFLLYPDTKK (138 aa)). A nonhelical region (NC1) region spans residues 275 to 419 (VEQIRSAFSV…TKKPTAMENL (145 aa)). A glycan (N-linked (GlcNAc...) asparagine) is linked at Asn320.

As to expression, specialized secretory supporting cells at the outer perimeter of the saccular epithelium.

It is found in the secreted. It localises to the extracellular space. The protein localises to the extracellular matrix. In terms of biological role, forms a microstructural matrix within the otolithic membrane. The chain is Inner ear-specific collagen from Lepomis macrochirus (Bluegill).